We begin with the raw amino-acid sequence, 65 residues long: Conotoxin Cal1.5 (65 aa).

A signal peptide spans 1 to 18 (MRCLPVFIILLLLASTAA). Residues 19–49 (VDVAGSKLKRRLERKPYQGSQAYVKKTAFGL) constitute a propeptide that is removed on maturation. 2 disulfide bridges follow: C52-C62 and C53-C59. P61 carries the post-translational modification 4-hydroxyproline.

It belongs to the conotoxin T superfamily. In terms of tissue distribution, expressed by the venom duct.

Its subcellular location is the secreted. Probable neurotoxin with unknown target. Possibly targets ion channels. The sequence is that of Conotoxin Cal1.5 from Californiconus californicus (California cone).